The following is a 130-amino-acid chain: Small ribosomal subunit protein uS11 (130 aa).

The protein belongs to the universal ribosomal protein uS11 family. Part of the 30S ribosomal subunit. Interacts with proteins S7 and S18. Binds to IF-3.

Its function is as follows. Located on the platform of the 30S subunit, it bridges several disparate RNA helices of the 16S rRNA. Forms part of the Shine-Dalgarno cleft in the 70S ribosome. The sequence is that of Small ribosomal subunit protein uS11 from Thermotoga maritima (strain ATCC 43589 / DSM 3109 / JCM 10099 / NBRC 100826 / MSB8).